The following is a 1054-amino-acid chain: NACHT, LRR and PYD domains-containing protein 12 (1054 aa).

The region spanning 1-95 (MLPSTARDGL…WERGQGEDLV (95 aa)) is the Pyrin domain. Residues 129–201 (YKDYVRRKFQ…SPIQMETLFE (73 aa)) enclose the FISNA domain. Residues 211-528 (HTVVLQGAAG…EFFAAMYCAL (318 aa)) enclose the NACHT domain. 217-224 (GAAGMGKS) contributes to the ATP binding site. 8 LRR repeats span residues 821-841 (YLVE…KLLC), 850-871 (RLRT…DLAS), 878-899 (SLLE…LLCE), 907-928 (KLQT…GIAS), 935-955 (CLQE…QLLG), 964-985 (RLQK…DLSS), 992-1013 (TLHE…LLCK), and 1021-1042 (KLRV…RMAA).

Belongs to the NLRP family. Interacts (via pyrin domain) with ASC. Interacts (via pyrin domain) with FAF1 (via UBA domain). Interacts with MAP3K14; this interaction promotes proteasomal degradation of MAP3K14. Interacts with NOD2; this interaction promotes degradation of NOD2 through the ubiquitin-proteasome pathway. Interacts with HSPA1A and HSPA8. Interacts with HSP90AA1. Interacts with TRIM25; this interaction inhibits RIGI-mediated signaling pathway. Mainly expressed in dendritic cells (DCs) and neutrophils.

It is found in the cytoplasm. Its function is as follows. Plays an essential role as an potent mitigator of inflammation. Primarily expressed in dendritic cells and macrophages, inhibits both canonical and non-canonical NF-kappa-B and ERK activation pathways. Functions as a negative regulator of NOD2 by targeting it to degradation via the proteasome pathway. In turn, promotes bacterial tolerance. Also inhibits the RIGI-mediated immune signaling against RNA viruses by reducing the E3 ubiquitin ligase TRIM25-mediated 'Lys-63'-linked RIGI activation but enhancing the E3 ubiquitin ligase RNF125-mediated 'Lys-48'-linked RIGI degradation. Also acts as a negative regulator of inflammatory response to mitigate obesity and obesity-associated diseases in adipose tissue. The protein is NACHT, LRR and PYD domains-containing protein 12 (Nlrp12) of Mus musculus (Mouse).